The following is a 130-amino-acid chain: Splicing regulatory small protein (130 aa).

A compositionally biased stretch (basic residues) spans Met-1–Ala-10. Disordered regions lie at residues Met-1–Gly-29 and Gly-74–Arg-130. The tract at residues Gly-16 to Pro-22 is mediates interaction with SRSF3. Basic and acidic residues predominate over residues Leu-77–Val-98. Positions Ser-120–Arg-130 are enriched in polar residues.

Interacts with SRSF3; increases SRSF3 binding to specific exons.

It is found in the nucleus. Its function is as follows. Interacts with the splicing factor SRSF3 and increases its binding to specific exons within pre-mRNA, thereby regulating exon-inclusion during alternative splicing. Does not directly bind pre-mRNA and could regulate a wider range of splicing factors through a similar mechanism. This Homo sapiens (Human) protein is Splicing regulatory small protein.